We begin with the raw amino-acid sequence, 350 residues long: Holliday junction branch migration complex subunit RuvB (350 aa).

The large ATPase domain (RuvB-L) stretch occupies residues 1-183 (MSAERLVNPH…FVAVHRLVFY (183 aa)). Residues leucine 22, arginine 23, glycine 64, lysine 67, threonine 68, serine 69, 130–132 (EDF), arginine 173, tyrosine 183, and arginine 220 contribute to the ATP site. Residue threonine 68 coordinates Mg(2+). The small ATPAse domain (RuvB-S) stretch occupies residues 184-254 (SDDAMTEIVS…VARDALAQLE (71 aa)). A head domain (RuvB-H) region spans residues 257-350 (ELGLDENDRR…ESGPQQATLF (94 aa)). 2 residues coordinate DNA: arginine 312 and arginine 317. Positions 331–350 (YPERTLPADDESGPQQATLF) are disordered.

Belongs to the RuvB family. Homohexamer. Forms an RuvA(8)-RuvB(12)-Holliday junction (HJ) complex. HJ DNA is sandwiched between 2 RuvA tetramers; dsDNA enters through RuvA and exits via RuvB. An RuvB hexamer assembles on each DNA strand where it exits the tetramer. Each RuvB hexamer is contacted by two RuvA subunits (via domain III) on 2 adjacent RuvB subunits; this complex drives branch migration. In the full resolvosome a probable DNA-RuvA(4)-RuvB(12)-RuvC(2) complex forms which resolves the HJ.

The protein localises to the cytoplasm. It catalyses the reaction ATP + H2O = ADP + phosphate + H(+). Its function is as follows. The RuvA-RuvB-RuvC complex processes Holliday junction (HJ) DNA during genetic recombination and DNA repair, while the RuvA-RuvB complex plays an important role in the rescue of blocked DNA replication forks via replication fork reversal (RFR). RuvA specifically binds to HJ cruciform DNA, conferring on it an open structure. The RuvB hexamer acts as an ATP-dependent pump, pulling dsDNA into and through the RuvAB complex. RuvB forms 2 homohexamers on either side of HJ DNA bound by 1 or 2 RuvA tetramers; 4 subunits per hexamer contact DNA at a time. Coordinated motions by a converter formed by DNA-disengaged RuvB subunits stimulates ATP hydrolysis and nucleotide exchange. Immobilization of the converter enables RuvB to convert the ATP-contained energy into a lever motion, pulling 2 nucleotides of DNA out of the RuvA tetramer per ATP hydrolyzed, thus driving DNA branch migration. The RuvB motors rotate together with the DNA substrate, which together with the progressing nucleotide cycle form the mechanistic basis for DNA recombination by continuous HJ branch migration. Branch migration allows RuvC to scan DNA until it finds its consensus sequence, where it cleaves and resolves cruciform DNA. This is Holliday junction branch migration complex subunit RuvB from Chloroflexus aurantiacus (strain ATCC 29366 / DSM 635 / J-10-fl).